A 278-amino-acid polypeptide reads, in one-letter code: Formamidopyrimidine-DNA glycosylase (278 aa).

Residue Pro-2 is the Schiff-base intermediate with DNA of the active site. The active-site Proton donor is the Glu-3. The active-site Proton donor; for beta-elimination activity is the Lys-59. DNA contacts are provided by His-93, Arg-112, and Arg-153. The segment at 238-272 adopts an FPG-type zinc-finger fold; that stretch reads NVYDRAGEPCPRCQSTIERIVVAQRSTYFCPTCQI. Arg-262 acts as the Proton donor; for delta-elimination activity in catalysis.

This sequence belongs to the FPG family. Monomer. Zn(2+) serves as cofactor.

The catalysed reaction is Hydrolysis of DNA containing ring-opened 7-methylguanine residues, releasing 2,6-diamino-4-hydroxy-5-(N-methyl)formamidopyrimidine.. It catalyses the reaction 2'-deoxyribonucleotide-(2'-deoxyribose 5'-phosphate)-2'-deoxyribonucleotide-DNA = a 3'-end 2'-deoxyribonucleotide-(2,3-dehydro-2,3-deoxyribose 5'-phosphate)-DNA + a 5'-end 5'-phospho-2'-deoxyribonucleoside-DNA + H(+). Its function is as follows. Involved in base excision repair of DNA damaged by oxidation or by mutagenic agents. Acts as a DNA glycosylase that recognizes and removes damaged bases. Has a preference for oxidized purines, such as 7,8-dihydro-8-oxoguanine (8-oxoG). Has AP (apurinic/apyrimidinic) lyase activity and introduces nicks in the DNA strand. Cleaves the DNA backbone by beta-delta elimination to generate a single-strand break at the site of the removed base with both 3'- and 5'-phosphates. This Chloroflexus aurantiacus (strain ATCC 29366 / DSM 635 / J-10-fl) protein is Formamidopyrimidine-DNA glycosylase.